The sequence spans 224 residues: Ribose-5-phosphate isomerase A (224 aa).

Residues 26-29, 82-85, and 95-98 each bind substrate; these read TGST, DGAD, and KGGG. Residue Glu104 is the Proton acceptor of the active site. Lys122 is a substrate binding site.

Belongs to the ribose 5-phosphate isomerase family. Homodimer.

The catalysed reaction is aldehydo-D-ribose 5-phosphate = D-ribulose 5-phosphate. Its pathway is carbohydrate degradation; pentose phosphate pathway; D-ribose 5-phosphate from D-ribulose 5-phosphate (non-oxidative stage): step 1/1. Functionally, catalyzes the reversible conversion of ribose-5-phosphate to ribulose 5-phosphate. In Lactococcus lactis subsp. cremoris (strain SK11), this protein is Ribose-5-phosphate isomerase A.